A 226-amino-acid polypeptide reads, in one-letter code: 2-C-methyl-D-erythritol 4-phosphate cytidylyltransferase (226 aa).

This sequence belongs to the IspD/TarI cytidylyltransferase family. IspD subfamily.

The enzyme catalyses 2-C-methyl-D-erythritol 4-phosphate + CTP + H(+) = 4-CDP-2-C-methyl-D-erythritol + diphosphate. It participates in isoprenoid biosynthesis; isopentenyl diphosphate biosynthesis via DXP pathway; isopentenyl diphosphate from 1-deoxy-D-xylulose 5-phosphate: step 2/6. Functionally, catalyzes the formation of 4-diphosphocytidyl-2-C-methyl-D-erythritol from CTP and 2-C-methyl-D-erythritol 4-phosphate (MEP). The sequence is that of 2-C-methyl-D-erythritol 4-phosphate cytidylyltransferase from Trichodesmium erythraeum (strain IMS101).